Consider the following 140-residue polypeptide: Putative pre-16S rRNA nuclease (140 aa).

The protein belongs to the YqgF nuclease family.

It localises to the cytoplasm. In terms of biological role, could be a nuclease involved in processing of the 5'-end of pre-16S rRNA. The polypeptide is Putative pre-16S rRNA nuclease (Vibrio vulnificus (strain YJ016)).